Here is a 711-residue protein sequence, read N- to C-terminus: Double-stranded RNA-specific editase 1 (711 aa).

Residues 1-78 form a disordered region; it reads MDIEDEENMS…KRRKTPGPVL (78 aa). Basic residues predominate over residues 63-73; that stretch reads SKYRLKKRRKT. Residues 78 to 144 enclose the DRBM 1 domain; the sequence is LPKNALMQLN…AEKALRSFVQ (67 aa). Interaction with substrate RNA regions lie at residues 83–88 and 104–105; these read LMQLNE and VH. Phosphoserine is present on serine 149. The tract at residues 176–220 is disordered; it reads LFNGFETPDKSEPPFYVGSNGDDSFSSSGDVSLSASPVPASLTQP. Residues 192–213 are compositionally biased toward low complexity; sequence VGSNGDDSFSSSGDVSLSASPV. Residues 231 to 298 enclose the DRBM 2 domain; it reads PSGKNPVMIL…AQSALATVFN (68 aa). Interaction with substrate RNA stretches follow at residues 237–242 and histidine 259; that span reads VMILNE. The A to I editase domain occupies 370-707; it reads SVSTGTKCIN…VEKPTEQDQF (338 aa). Residue histidine 394 coordinates Zn(2+). Glutamate 396 (proton donor) is an active-site residue. Arginine 400 and arginine 401 together coordinate 1D-myo-inositol hexakisphosphate. Zn(2+) contacts are provided by cysteine 451 and cysteine 526. Residues lysine 529, arginine 532, lysine 639, lysine 672, lysine 682, and lysine 700 each contribute to the 1D-myo-inositol hexakisphosphate site.

In terms of assembly, homodimer. Homodimerization is essential for its catalytic activity. Can form heterodimers with isoform 5 of ADAR/ADAR1. 1D-myo-inositol hexakisphosphate is required as a cofactor.

The protein localises to the nucleus. It localises to the nucleolus. It catalyses the reaction adenosine in double-stranded RNA + H2O + H(+) = inosine in double-stranded RNA + NH4(+). Its function is as follows. Catalyzes the hydrolytic deamination of adenosine to inosine in double-stranded RNA (dsRNA) referred to as A-to-I RNA editing. This may affect gene expression and function in a number of ways that include mRNA translation by changing codons and hence the amino acid sequence of proteins; pre-mRNA splicing by altering splice site recognition sequences; RNA stability by changing sequences involved in nuclease recognition; genetic stability in the case of RNA virus genomes by changing sequences during viral RNA replication; and RNA structure-dependent activities such as microRNA production or targeting or protein-RNA interactions. Can edit both viral and cellular RNAs and can edit RNAs at multiple sites (hyper-editing) or at specific sites (site-specific editing). Its cellular RNA substrates include: bladder cancer-associated protein (BLCAP), neurotransmitter receptors for glutamate (GRIA2 and GRIK2) and serotonin (HTR2C), GABA receptor (GABRA3) and potassium voltage-gated channel (KCNA1). Site-specific RNA editing of transcripts encoding these proteins results in amino acid substitutions which consequently alter their functional activities. Edits GRIA2 at both the Q/R and R/G sites efficiently but converts the adenosine in hotspot1 much less efficiently. Can inhibit cell proliferation and migration and can stimulate exocytosis. This Mus musculus (Mouse) protein is Double-stranded RNA-specific editase 1 (Adarb1).